Reading from the N-terminus, the 482-residue chain is 2-succinylbenzoate--CoA ligase (482 aa).

Belongs to the ATP-dependent AMP-binding enzyme family. MenE subfamily.

It catalyses the reaction 2-succinylbenzoate + ATP + CoA = 2-succinylbenzoyl-CoA + AMP + diphosphate. The protein operates within quinol/quinone metabolism; 1,4-dihydroxy-2-naphthoate biosynthesis; 1,4-dihydroxy-2-naphthoate from chorismate: step 5/7. It functions in the pathway quinol/quinone metabolism; menaquinone biosynthesis. In terms of biological role, converts 2-succinylbenzoate (OSB) to 2-succinylbenzoyl-CoA (OSB-CoA). The protein is 2-succinylbenzoate--CoA ligase of Bacillus thuringiensis subsp. konkukian (strain 97-27).